A 251-amino-acid polypeptide reads, in one-letter code: Ubiquinone/menaquinone biosynthesis C-methyltransferase UbiE (251 aa).

S-adenosyl-L-methionine is bound by residues threonine 74, aspartate 95, and 123–124 (NA).

Belongs to the class I-like SAM-binding methyltransferase superfamily. MenG/UbiE family.

It carries out the reaction a 2-demethylmenaquinol + S-adenosyl-L-methionine = a menaquinol + S-adenosyl-L-homocysteine + H(+). The enzyme catalyses a 2-methoxy-6-(all-trans-polyprenyl)benzene-1,4-diol + S-adenosyl-L-methionine = a 5-methoxy-2-methyl-3-(all-trans-polyprenyl)benzene-1,4-diol + S-adenosyl-L-homocysteine + H(+). It functions in the pathway quinol/quinone metabolism; menaquinone biosynthesis; menaquinol from 1,4-dihydroxy-2-naphthoate: step 2/2. It participates in cofactor biosynthesis; ubiquinone biosynthesis. In terms of biological role, methyltransferase required for the conversion of demethylmenaquinol (DMKH2) to menaquinol (MKH2) and the conversion of 2-polyprenyl-6-methoxy-1,4-benzoquinol (DDMQH2) to 2-polyprenyl-3-methyl-6-methoxy-1,4-benzoquinol (DMQH2). The sequence is that of Ubiquinone/menaquinone biosynthesis C-methyltransferase UbiE from Pseudoalteromonas translucida (strain TAC 125).